The chain runs to 410 residues: Chlorobenzene dioxygenase, ferredoxin reductase component (410 aa).

4 to 35 (HVAIIGNGVAGFTTAQALRAEGFEGRISLIGN) is an FAD binding site. 145–173 (RLVIAGGGLIGCEVATTARKLGLAVTILE) contacts NAD(+).

It belongs to the bacterial ring-hydroxylating dioxygenase ferredoxin reductase family. As to quaternary structure, this dioxygenase system consists of four proteins: the two subunits of the oxygenase component (TecA1 and TecA2), a ferredoxin (TecA3) and a ferredoxin reductase (TecA4). FAD serves as cofactor.

It carries out the reaction 2 reduced [2Fe-2S]-[ferredoxin] + NAD(+) + H(+) = 2 oxidized [2Fe-2S]-[ferredoxin] + NADH. Its pathway is aromatic compound metabolism. Functionally, part of the chlorobenzene dioxygenase system that catalyzes the dihydroxylation of a range of aromatic compounds, including chlorinated benzenes and toluenes, and dinuclear aromatics such as biphenyl and dibenzo-p-dioxin. This is Chlorobenzene dioxygenase, ferredoxin reductase component from Cupriavidus sp. (strain PS12).